The chain runs to 151 residues: Peptide methionine sulfoxide reductase MsrB (151 aa).

Residues lysine 5–lysine 127 form the MsrB domain. Cysteine 116 acts as the Nucleophile in catalysis.

This sequence belongs to the MsrB Met sulfoxide reductase family.

It catalyses the reaction L-methionyl-[protein] + [thioredoxin]-disulfide + H2O = L-methionyl-(R)-S-oxide-[protein] + [thioredoxin]-dithiol. The protein is Peptide methionine sulfoxide reductase MsrB of Bacillus licheniformis (strain ATCC 14580 / DSM 13 / JCM 2505 / CCUG 7422 / NBRC 12200 / NCIMB 9375 / NCTC 10341 / NRRL NRS-1264 / Gibson 46).